Here is a 118-residue protein sequence, read N- to C-terminus: Putative membrane protein insertion efficiency factor (118 aa).

The protein belongs to the UPF0161 family.

The protein resides in the cell inner membrane. Could be involved in insertion of integral membrane proteins into the membrane. The chain is Putative membrane protein insertion efficiency factor from Helicobacter pylori (strain HPAG1).